The following is a 368-amino-acid chain: RING finger protein 32 (368 aa).

The segment at 45–82 is disordered; that stretch reads RKKEKKSKSLKRDATAIIDTGLRKSTEGPNMEDPEKEY. The RING-type 1; atypical zinc-finger motif lies at 129–171; it reads CPICKEEFELHPQVLLSCSHVFHRACLQAFEKFTNKKTCPLCR. An IQ domain is found at 188–217; sequence RVKCATRIQAYWRGYIVRKWYRNLRKIIPP. Residues 295-358 form an RING-type 2; atypical zinc finger; that stretch reads CSICLTPLSF…APFHVCPLCR (64 aa).

The protein localises to the cytoplasm. In terms of biological role, may play a role in sperm formation. The sequence is that of RING finger protein 32 (Rnf32) from Mus musculus (Mouse).